The sequence spans 237 residues: MLSAFQRLFRVLFVIETVSEYGVLIFIYGWPFLQTLAMLLIGTVSFHLWIRRNRERNSRSGKTRCRSKRSEQSMDMGTSALSKKPWWTLPQNFHAPMVFHMEEDQEELIFGHGDTYLRCIEVHSHTLIQLESWFTATGQTRVTVVGPHRARQWLLHMFCCVGSQDSYHHARGLEMLERVRSQPLTNDDLVTSISVPPYTGDLSLAPRISGTVCLSVPQPSPYQVIGCSGFHLSSLYP.

Transmembrane regions (helical) follow at residues 7–29 (RLFRVLFVIETVSEYGVLIFIYG) and 33–50 (LQTLAMLLIGTVSFHLWI). A KH; atypical domain is found at 96 to 155 (PMVFHMEEDQEELIFGHGDTYLRCIEVHSHTLIQLESWFTATGQTRVTVVGPHRARQWLL).

The protein belongs to the KHDC1 family.

Its subcellular location is the membrane. In Homo sapiens (Human), this protein is KH homology domain-containing protein 1.